The primary structure comprises 270 residues: 3-phenylpropionate-dihydrodiol/cinnamic acid-dihydrodiol dehydrogenase (270 aa).

Position 10–34 (10–34 (FITGGGSGLGLALVERFIEKGAQVA)) interacts with NAD(+). A substrate-binding site is contributed by serine 143. The active-site Proton acceptor is tyrosine 156.

The protein belongs to the short-chain dehydrogenases/reductases (SDR) family.

The enzyme catalyses 3-(cis-5,6-dihydroxycyclohexa-1,3-dien-1-yl)propanoate + NAD(+) = 3-(2,3-dihydroxyphenyl)propanoate + NADH + H(+). The catalysed reaction is (2E)-3-(cis-5,6-dihydroxycyclohexa-1,3-dien-1-yl)prop-2-enoate + NAD(+) = (2E)-3-(2,3-dihydroxyphenyl)prop-2-enoate + NADH + H(+). The protein operates within aromatic compound metabolism; 3-phenylpropanoate degradation. Its function is as follows. Converts 3-phenylpropionate-dihydrodiol (PP-dihydrodiol) and cinnamic acid-dihydrodiol (CI-dihydrodiol) into 3-(2,3-dihydroxylphenyl)propanoic acid (DHPP) and 2,3-dihydroxicinnamic acid (DHCI), respectively. The sequence is that of 3-phenylpropionate-dihydrodiol/cinnamic acid-dihydrodiol dehydrogenase (hcaB) from Escherichia coli.